We begin with the raw amino-acid sequence, 379 residues long: Anhydro-N-acetylmuramic acid kinase (379 aa).

Residue 9–16 (GTSADGVD) participates in ATP binding.

This sequence belongs to the anhydro-N-acetylmuramic acid kinase family.

The enzyme catalyses 1,6-anhydro-N-acetyl-beta-muramate + ATP + H2O = N-acetyl-D-muramate 6-phosphate + ADP + H(+). It participates in amino-sugar metabolism; 1,6-anhydro-N-acetylmuramate degradation. Its pathway is cell wall biogenesis; peptidoglycan recycling. In terms of biological role, catalyzes the specific phosphorylation of 1,6-anhydro-N-acetylmuramic acid (anhMurNAc) with the simultaneous cleavage of the 1,6-anhydro ring, generating MurNAc-6-P. Is required for the utilization of anhMurNAc either imported from the medium or derived from its own cell wall murein, and thus plays a role in cell wall recycling. The polypeptide is Anhydro-N-acetylmuramic acid kinase (Synechococcus sp. (strain CC9605)).